A 342-amino-acid polypeptide reads, in one-letter code: Isopentenyl-diphosphate delta-isomerase (342 aa).

Substrate is bound at residue 12-13 (RK). FMN contacts are provided by residues 71–73 (AMT), Ser101, and Asn129. Residue 101–103 (SQR) coordinates substrate. Gln163 serves as a coordination point for substrate. Glu164 contributes to the Mg(2+) binding site. FMN contacts are provided by residues Lys195, Thr225, 272 to 274 (GIR), and 293 to 294 (AR).

Belongs to the IPP isomerase type 2 family. As to quaternary structure, homooctamer. Dimer of tetramers. It depends on FMN as a cofactor. NADPH is required as a cofactor. Requires Mg(2+) as cofactor.

Its subcellular location is the cytoplasm. It catalyses the reaction isopentenyl diphosphate = dimethylallyl diphosphate. Functionally, involved in the biosynthesis of isoprenoids. Catalyzes the 1,3-allylic rearrangement of the homoallylic substrate isopentenyl (IPP) to its allylic isomer, dimethylallyl diphosphate (DMAPP). The chain is Isopentenyl-diphosphate delta-isomerase from Mycolicibacterium vanbaalenii (strain DSM 7251 / JCM 13017 / BCRC 16820 / KCTC 9966 / NRRL B-24157 / PYR-1) (Mycobacterium vanbaalenii).